Consider the following 478-residue polypeptide: Deoxyribodipyrimidine photo-lyase (478 aa).

The Photolyase/cryptochrome alpha/beta domain occupies 2 to 136 (NVNLMWFRND…IINCFHDSVL (135 aa)). Residue Glu-110 participates in (6R)-5,10-methylene-5,6,7,8-tetrahydrofolate binding. Residues Tyr-227 and 239–243 (TSMLS) contribute to the FAD site. Interaction with DNA stretches follow at residues 279–286 (ELLWREFY) and 346–347 (NR). 377-379 (DGD) lines the FAD pocket. Position 409 (Gln-409) interacts with DNA.

This sequence belongs to the DNA photolyase class-1 family. As to quaternary structure, monomer. Requires FAD as cofactor. It depends on (6R)-5,10-methylene-5,6,7,8-tetrahydrofolate as a cofactor.

The catalysed reaction is cyclobutadipyrimidine (in DNA) = 2 pyrimidine residues (in DNA).. Involved in repair of UV radiation-induced DNA damage. Catalyzes the light-dependent monomerization (300-600 nm) of cyclobutyl pyrimidine dimers (in cis-syn configuration), which are formed between adjacent bases on the same DNA strand upon exposure to ultraviolet radiation. This Buchnera aphidicola subsp. Baizongia pistaciae (strain Bp) protein is Deoxyribodipyrimidine photo-lyase (phrB).